The chain runs to 1041 residues: Probable rhamnogalacturonate lyase C (1041 aa).

The N-terminal stretch at 1-21 (MFASTLRKTFVFLGLATYSAA) is a signal peptide. Residues N28, N94, N116, N142, N231, N283, N528, and N634 are each glycosylated (N-linked (GlcNAc...) asparagine). The interval 703-728 (ISRPCPRKGGTRRRKKERKKEGKKQG) is disordered. Over residues 707-720 (CPRKGGTRRRKKER) the composition is skewed to basic residues. N864 is a glycosylation site (N-linked (GlcNAc...) asparagine).

Belongs to the polysaccharide lyase 4 family.

It localises to the secreted. The enzyme catalyses Endotype eliminative cleavage of L-alpha-rhamnopyranosyl-(1-&gt;4)-alpha-D-galactopyranosyluronic acid bonds of rhamnogalacturonan I domains in ramified hairy regions of pectin leaving L-rhamnopyranose at the reducing end and 4-deoxy-4,5-unsaturated D-galactopyranosyluronic acid at the non-reducing end.. Pectinolytic enzymes consist of four classes of enzymes: pectin lyase, polygalacturonase, pectin methylesterase and rhamnogalacturonase. Degrades the rhamnogalacturonan I (RG-I) backbone of pectin. This Emericella nidulans (strain FGSC A4 / ATCC 38163 / CBS 112.46 / NRRL 194 / M139) (Aspergillus nidulans) protein is Probable rhamnogalacturonate lyase C (rglC).